A 280-amino-acid polypeptide reads, in one-letter code: Fasciclin-like arabinogalactan protein 3 (280 aa).

Residues 1 to 24 form the signal peptide; that stretch reads MGLKVSSSLLCLTILLAVSSIVSA. Positions 25–169 constitute an FAS1 domain; the sequence is VNITRVLEKY…LSVVQISMPI (145 aa). Residues Asn26, Asn126, and Asn159 are each glycosylated (N-linked (GlcNAc...) asparagine). The segment covering 180–193 has biased composition (pro residues); sequence VPPPPPMSSPPAPS. A disordered region spans residues 180 to 262; that stretch reads VPPPPPMSSP…EPPSSASNTG (83 aa). Residues 219-234 show a composition bias toward low complexity; that stretch reads APETAPASAPSESDSP. Residue Ser256 is the site of GPI-anchor amidated serine attachment. The propeptide at 257–280 is removed in mature form; that stretch reads SASNTGLSFGAVLVLGFVASFVGF.

It belongs to the fasciclin-like AGP family.

Its subcellular location is the cell membrane. May be a cell surface adhesion protein. This Arabidopsis thaliana (Mouse-ear cress) protein is Fasciclin-like arabinogalactan protein 3 (FLA3).